A 156-amino-acid polypeptide reads, in one-letter code: S-ribosylhomocysteine lyase (156 aa).

The Fe cation site is built by H53, H57, and C122.

The protein belongs to the LuxS family. In terms of assembly, homodimer. It depends on Fe cation as a cofactor.

It carries out the reaction S-(5-deoxy-D-ribos-5-yl)-L-homocysteine = (S)-4,5-dihydroxypentane-2,3-dione + L-homocysteine. In terms of biological role, involved in the synthesis of autoinducer 2 (AI-2) which is secreted by bacteria and is used to communicate both the cell density and the metabolic potential of the environment. The regulation of gene expression in response to changes in cell density is called quorum sensing. Catalyzes the transformation of S-ribosylhomocysteine (RHC) to homocysteine (HC) and 4,5-dihydroxy-2,3-pentadione (DPD). The protein is S-ribosylhomocysteine lyase of Finegoldia magna (strain ATCC 29328 / DSM 20472 / WAL 2508) (Peptostreptococcus magnus).